The sequence spans 350 residues: tRNA uridine(34) hydroxylase (350 aa).

The Rhodanese domain occupies 146–240 (DDPDALFIDM…YARKAREQGL (95 aa)). The active-site Cysteine persulfide intermediate is cysteine 200.

It belongs to the TrhO family.

It carries out the reaction uridine(34) in tRNA + AH2 + O2 = 5-hydroxyuridine(34) in tRNA + A + H2O. Catalyzes oxygen-dependent 5-hydroxyuridine (ho5U) modification at position 34 in tRNAs, the first step in 5-carboxymethoxyuridine (cmo5U) biosynthesis. May be part of an alternate pathway, which is able to bypass cmo5U biogenesis in a subset of tRNAs under aerobic conditions. The protein is tRNA uridine(34) hydroxylase of Escherichia coli O45:K1 (strain S88 / ExPEC).